The following is a 1760-amino-acid chain: MSNRFSVYSSHSTGVSSARPSAPSTVTTTTLLNALHAYYNSGQPYQLDAGTSLVVNTWVTATRANANGQEGGTIDRDLALRAWEHARRRAEDGCIVLCSTHQSTPSIFEPFLTALPLTTPNIAFTALTALRPFLSAVTSFNPSYSLYSALSARYSINLKGDVVGLSLALSTSGINVRKGLLDIPTEAGYRAFDVFYYLLASISTPAEREFLNLKDASSYALLSKSGTYTPPAYLPAADDAAAAEDFRAALKSIGIKGAAQRGLLSTLAGLLKLGNATGFLVDQEDLEEACDEVGGLLGLDPEVLLHSCSTDDREVLISGIYEALVDWVIEKANEAISSELQAILDNDPSTSGGSGPGGQWTDDDTVSITVVDIPRPALGKAVAVRNVFDDNAGINAEMKEDGVTVPPVGHAIANDVSSAVAQVEADLGITTGSAWHEREYELGKRQEVLEKVGLEVDMDSFLRKLLLPVEAEGITVGKRGRFDLPTTLGSSRVWHHISVHPTDDLPETLSTFTPTAAWSAGVVSRQLREWRLAEWANRRLRQLDFTADFDMDEFVGRYYRLGCAEGRDGVESWLMERGWTNGDAFVGHQRIWMRESAWWEAETMLDMKPEEPATANPFLYGNTMLDAGMPHYAGTPMAESTSLLGSRDDLLNHRQSTLAPSFHGGAKSIAPSVPQTLNMGGDYGLGSKGDTRKWDNPYSDEYAHYNNGELDPEVGDPKHIEKKPITQGRRIWVGFVWALTFWIPSFALRWIGRMKRPDVRMAWREKLVLMLIILLFNGVVCFYIIAFGDLLCPNKDKAWNEKQLSWHALDNDFYVSIHGNVYDITKFWRLQHSDSSIETTTSNMKPFAGEILDQYFTPPLTRFCSPYVTEQSVTLQFNNTNALEYPNAEHYCGSYHTPSTTTKLHNITWYEDIFLPKIKTYYKGPLVWSKSTVQKQATDSSRYWVIVHDKIYDLTDYFYTAELFDNDDTYAFLPSSVTDLFKNYAGEDVTDKWQNTTDFQQSQTCLDYVFYKGKVDFRDSPRCTVNNWILLSFTVLICAVILVKFVSALQLGSKRRPAPQDKFVICHVPAYTEGEDALRKGLDSLTALQYDNKRKLIFVICDGMIVGGGNDRPTPKIVLDILGVDPKVDPPALPCMAIGQGSEQLNYGKVYSGLYEYEGNVVPYIVVVKVGKESEQSRPKPGNRGKRDSQIMMMRFLNRVHHRAPMSPLELEIFHQINNVIGVDPELYEYCLMVDADTSVREDSLNRLVAACANDARIAGICGETSLQNEERSWWTMIQVYEYYISHHLAKAFESLFGSVTCLPGCFCMYRLRTADKGKPLIISDKVIEEYADNDVDTLHKKNLLSLGEDRFLTTLMTKHFPEMSYKFIPDAYASTAAPETWSVLLSQRRRWINSTVHNLVEVAALKDMCGFCLFSMRFVVLVDLLGTVILPATCVYLGYLIYRVASHTGPFPMISIVILAGVYGLQAIIFLLKRQWQHIGWMIIYICAYPIYNFILPLYSFWKQDDFSWGSTRIVIGEQGNKRVVAVDDEGFDPRSVPLQRWDDYALANNLPGRRGDFGMSQEKMYGGRYDDMALEMDDMHSNYSSVKPASTILTGFPHHQGRHGSPYMPPQSPAPFANTPGNRNSHMSSLTRYTDQPFASGHMASRSLGNLSQVPDGMTNRHSVGLMQSTENLLGRPNSRSPVGGISRPVSAFDFRGSGGPDEGAITEAIRACLAEVDLDTVTKKQVRALVEQRLQTTLMGDKRTFLDRQIDHELANM.

Over residues 1–17 (MSNRFSVYSSHSTGVSS) the composition is skewed to low complexity. The tract at residues 1 to 23 (MSNRFSVYSSHSTGVSSARPSAP) is disordered. The region spanning 1-374 (MSNRFSVYSS…TVSITVVDIP (374 aa)) is the Myosin motor domain. Asn275 carries an N-linked (GlcNAc...) asparagine glycan. The tract at residues 344–363 (LDNDPSTSGGSGPGGQWTDD) is disordered. Residue Pro374 is a region of interest, actin-binding. Helical transmembrane passes span 731–751 (IWVG…LRWI) and 767–787 (LVLM…IIAF). N-linked (GlcNAc...) asparagine glycosylation is found at Asn878, Asn906, and Asn995. The helical transmembrane segment at 1029–1049 (ILLSFTVLICAVILVKFVSAL) threads the bilayer. A glycan (N-linked (GlcNAc...) asparagine) is linked at Asn1394. 3 helical membrane-spanning segments follow: residues 1419-1439 (FVVL…VYLG), 1452-1472 (FPMI…IIFL), and 1480-1500 (IGWM…LPLY). N-linked (GlcNAc...) asparagine glycosylation is found at Asn1584 and Asn1652. The region spanning 1702-1758 (GPDEGAITEAIRACLAEVDLDTVTKKQVRALVEQRLQTTLMGDKRTFLDRQIDHELA) is the DEK-C domain.

It in the N-terminal section; belongs to the TRAFAC class myosin-kinesin ATPase superfamily. Myosin family. This sequence in the C-terminal section; belongs to the chitin synthase family. Class V subfamily.

It localises to the cell membrane. The protein resides in the cell septum. It is found in the cell tip. The enzyme catalyses [(1-&gt;4)-N-acetyl-beta-D-glucosaminyl](n) + UDP-N-acetyl-alpha-D-glucosamine = [(1-&gt;4)-N-acetyl-beta-D-glucosaminyl](n+1) + UDP + H(+). Functionally, polymerizes chitin, a structural polymer of the cell wall and septum, by transferring the sugar moiety of UDP-GlcNAc to the non-reducing end of the growing chitin polymer. Plays an important role in septal growth or maintenance. Mediates colony spore formation. The sequence is that of Chitin synthase csmB from Aspergillus niger (strain ATCC MYA-4892 / CBS 513.88 / FGSC A1513).